The primary structure comprises 822 residues: Endonuclease MutS2 (822 aa).

Position 348–355 (348–355) interacts with ATP; that stretch reads GPNTGGKT. The segment at 707–737 is disordered; that stretch reads SLNGKKVEPPPKSEPVPKKVKAEPPATEAKS. Positions 709-728 are enriched in basic and acidic residues; that stretch reads NGKKVEPPPKSEPVPKKVKA. The Smr domain occupies 749–822; sequence LDCRGDRLER…GAGVTIAYLR (74 aa).

Belongs to the DNA mismatch repair MutS family. MutS2 subfamily. In terms of assembly, homodimer. Binds to stalled ribosomes, contacting rRNA.

Functionally, endonuclease that is involved in the suppression of homologous recombination and thus may have a key role in the control of bacterial genetic diversity. In terms of biological role, acts as a ribosome collision sensor, splitting the ribosome into its 2 subunits. Detects stalled/collided 70S ribosomes which it binds and splits by an ATP-hydrolysis driven conformational change. Acts upstream of the ribosome quality control system (RQC), a ribosome-associated complex that mediates the extraction of incompletely synthesized nascent chains from stalled ribosomes and their subsequent degradation. Probably generates substrates for RQC. The protein is Endonuclease MutS2 of Synechocystis sp. (strain ATCC 27184 / PCC 6803 / Kazusa).